The primary structure comprises 789 residues: DEAD-box ATP-dependent RNA helicase 28 (789 aa).

A disordered region spans residues 1 to 152 (MPSSFFFEDA…AEYKPEDATP (152 aa)). Residues 13-66 (DELELIRNQEDSSEEDVKEGEAEEHEAGEDEDGEEEYEEEDDDEEEEDEKRKRD) are a coiled coil. Positions 23–60 (DSSEEDVKEGEAEEHEAGEDEDGEEEYEEEDDDEEEED) are enriched in acidic residues. A compositionally biased stretch (basic and acidic residues) spans 83–99 (GEEHARRHTTSIDEKIS). Positions 110-135 (SINEEEEEEEEEEDASDAETDKQEEY) form a coiled coil. The segment covering 112-127 (NEEEEEEEEEEDASDA) has biased composition (acidic residues). The short motif at 167–195 (DTFMELNLSRPLLRACETLGYKKPTPIQA) is the Q motif element. The Helicase ATP-binding domain maps to 198 to 372 (IPLALTGRDL…KLSLNKPLRL (175 aa)). Position 211–218 (211–218 (AITGSGKT)) interacts with ATP. Residues 320-323 (DEAD) carry the DEAD box motif. In terms of domain architecture, Helicase C-terminal spans 402-546 (VLLSLCTRTF…SRVIPEQSIV (145 aa)). Coiled-coil stretches lie at residues 563-591 (ISAE…HRDE) and 628-677 (SADR…EDEE). The segment at 611–789 (AQAEKDSAGN…FKSKARYKRR (179 aa)) is disordered. Residues 628-637 (SADRAEDLKM) are compositionally biased toward basic and acidic residues. Positions 638 to 656 (KEKRKREREKNLPRKKRRK) are enriched in basic residues. Over residues 665–678 (EDNEGEEEEEDEEG) the composition is skewed to acidic residues. Basic and acidic residues-rich tracts occupy residues 691-701 (KKQETDKKGLT), 718-734 (RAID…DKKQ), and 743-761 (PRGE…EKKQ). A compositionally biased stretch (basic residues) spans 772–789 (PRTKSKNSFKSKARYKRR).

Belongs to the DEAD box helicase family. DDX27/DRS1 subfamily.

The enzyme catalyses ATP + H2O = ADP + phosphate + H(+). The polypeptide is DEAD-box ATP-dependent RNA helicase 28 (RH28) (Arabidopsis thaliana (Mouse-ear cress)).